The primary structure comprises 47 residues: Large ribosomal subunit protein bL36A (47 aa).

The protein belongs to the bacterial ribosomal protein bL36 family.

The protein is Large ribosomal subunit protein bL36A of Yersinia enterocolitica serotype O:8 / biotype 1B (strain NCTC 13174 / 8081).